Reading from the N-terminus, the 571-residue chain is Proline--tRNA ligase (571 aa).

It belongs to the class-II aminoacyl-tRNA synthetase family. ProS type 1 subfamily. As to quaternary structure, homodimer.

Its subcellular location is the cytoplasm. The enzyme catalyses tRNA(Pro) + L-proline + ATP = L-prolyl-tRNA(Pro) + AMP + diphosphate. Catalyzes the attachment of proline to tRNA(Pro) in a two-step reaction: proline is first activated by ATP to form Pro-AMP and then transferred to the acceptor end of tRNA(Pro). As ProRS can inadvertently accommodate and process non-cognate amino acids such as alanine and cysteine, to avoid such errors it has two additional distinct editing activities against alanine. One activity is designated as 'pretransfer' editing and involves the tRNA(Pro)-independent hydrolysis of activated Ala-AMP. The other activity is designated 'posttransfer' editing and involves deacylation of mischarged Ala-tRNA(Pro). The misacylated Cys-tRNA(Pro) is not edited by ProRS. This Pseudomonas fluorescens (strain ATCC BAA-477 / NRRL B-23932 / Pf-5) protein is Proline--tRNA ligase.